A 567-amino-acid polypeptide reads, in one-letter code: Geraniol synthase, chloroplastic (567 aa).

The transit peptide at 1–63 (MSCARITVTL…GDNSQRKNTR (63 aa)) directs the protein to the chloroplast. Residues 48–75 (STPLINGDNSQRKNTRQHMEESSSKRRE) are disordered. Residues 64–75 (QHMEESSSKRRE) are compositionally biased toward basic and acidic residues. 5 residues coordinate (2E)-geranyl diphosphate: arginine 286, aspartate 323, aspartate 327, arginine 466, and aspartate 469. The Mn(2+) site is built by aspartate 323 and aspartate 327. Residues 323 to 327 (DDIFD) carry the DDXXD motif motif. The Mn(2+) site is built by aspartate 469, threonine 473, and glutamate 477.

It belongs to the terpene synthase family. Tpsb subfamily. In terms of assembly, homodimer. It depends on Mn(2+) as a cofactor. As to expression, expressed in the peltate glandular trichomes of the leaves.

The protein resides in the plastid. It localises to the chloroplast. It catalyses the reaction (2E)-geranyl diphosphate + H2O = (2E)-geraniol + diphosphate. It participates in secondary metabolite biosynthesis; terpenoid biosynthesis. Functionally, monoterpene synthase that catalyzes the formation of geraniol from geranyl diphosphate. The sequence is that of Geraniol synthase, chloroplastic (GES) from Ocimum basilicum (Sweet basil).